The primary structure comprises 321 residues: NADPH-dependent D-xylose reductase (321 aa).

Tyr-50 acts as the Proton donor in catalysis. His-112 lines the substrate pocket. NADP(+) contacts are provided by residues 167–168 (SN), 216–225 (SSFGPQSFVE), and 272–282 (KSNKKERLLGN).

Belongs to the aldo/keto reductase family.

It carries out the reaction xylitol + NAD(+) = D-xylose + NADH + H(+). The catalysed reaction is xylitol + NADP(+) = D-xylose + NADPH + H(+). The protein operates within carbohydrate metabolism; D-xylose degradation. Reduces D-xylose into xylitol. Preferentially utilizes NADPH as a cosubstrate. The chain is NADPH-dependent D-xylose reductase (XYL1) from Candida boidinii (Yeast).